We begin with the raw amino-acid sequence, 406 residues long: Serine/threonine transporter SstT (406 aa).

A run of 9 helical transmembrane segments spans residues 15–35, 47–67, 81–101, 140–160, 191–211, 215–235, 289–309, 315–335, and 362–382; these read LVLQILVGIILGISLALVSPS, FVGALKAIAPILVFILVAASI, IIAMYLAGTFFAALTAVVLSF, ALMSANYIGILAWGVGLGLAL, FGIFGLVASTFATTGFDALAG, LLVVLLSAMAIIALIVNPAMV, IPLGATINMAGAAITITTLTL, MGIEVDLMTAILLSVVAAVSA, and IAMQVVAVGFIIGVIQDSAET.

Belongs to the dicarboxylate/amino acid:cation symporter (DAACS) (TC 2.A.23) family.

The protein localises to the cell inner membrane. It catalyses the reaction L-serine(in) + Na(+)(in) = L-serine(out) + Na(+)(out). The catalysed reaction is L-threonine(in) + Na(+)(in) = L-threonine(out) + Na(+)(out). Its function is as follows. Involved in the import of serine and threonine into the cell, with the concomitant import of sodium (symport system). The chain is Serine/threonine transporter SstT from Vibrio vulnificus (strain CMCP6).